Here is a 160-residue protein sequence, read N- to C-terminus: Phosphopantetheine adenylyltransferase (160 aa).

Serine 10 provides a ligand contact to substrate. ATP-binding positions include 10 to 11 and histidine 18; that span reads SF. Substrate contacts are provided by lysine 42, threonine 74, and arginine 88. ATP is bound by residues 89-91, glutamate 99, and 124-130; these read GLR and YSFISST.

It belongs to the bacterial CoaD family. Homohexamer. Mg(2+) is required as a cofactor.

Its subcellular location is the cytoplasm. It carries out the reaction (R)-4'-phosphopantetheine + ATP + H(+) = 3'-dephospho-CoA + diphosphate. It participates in cofactor biosynthesis; coenzyme A biosynthesis; CoA from (R)-pantothenate: step 4/5. In terms of biological role, reversibly transfers an adenylyl group from ATP to 4'-phosphopantetheine, yielding dephospho-CoA (dPCoA) and pyrophosphate. In Leptospira borgpetersenii serovar Hardjo-bovis (strain L550), this protein is Phosphopantetheine adenylyltransferase.